Here is a 60-residue protein sequence, read N- to C-terminus: MLKWAIILAIVALIAGALGFSGLAGAAAGVAKILFFLFLVGFVLVLLLGGTVFKAATGPK.

2 helical membrane-spanning segments follow: residues 4 to 24 (WAII…SGLA) and 33 to 53 (ILFF…GTVF).

It belongs to the UPF0391 family.

It localises to the cell membrane. This Caulobacter vibrioides (strain NA1000 / CB15N) (Caulobacter crescentus) protein is UPF0391 membrane protein CCNA_00709.